The chain runs to 183 residues: ATP synthase subunit delta (183 aa).

The protein belongs to the ATPase delta chain family. In terms of assembly, F-type ATPases have 2 components, F(1) - the catalytic core - and F(0) - the membrane proton channel. F(1) has five subunits: alpha(3), beta(3), gamma(1), delta(1), epsilon(1). F(0) has three main subunits: a(1), b(2) and c(10-14). The alpha and beta chains form an alternating ring which encloses part of the gamma chain. F(1) is attached to F(0) by a central stalk formed by the gamma and epsilon chains, while a peripheral stalk is formed by the delta and b chains.

It localises to the cell inner membrane. F(1)F(0) ATP synthase produces ATP from ADP in the presence of a proton or sodium gradient. F-type ATPases consist of two structural domains, F(1) containing the extramembraneous catalytic core and F(0) containing the membrane proton channel, linked together by a central stalk and a peripheral stalk. During catalysis, ATP synthesis in the catalytic domain of F(1) is coupled via a rotary mechanism of the central stalk subunits to proton translocation. Functionally, this protein is part of the stalk that links CF(0) to CF(1). It either transmits conformational changes from CF(0) to CF(1) or is implicated in proton conduction. This is ATP synthase subunit delta from Desulforapulum autotrophicum (strain ATCC 43914 / DSM 3382 / VKM B-1955 / HRM2) (Desulfobacterium autotrophicum).